The chain runs to 891 residues: Translation initiation factor IF-2 (891 aa).

Residues 50 to 303 are disordered; it reads KKEHGSADES…TSMQHGFDKS (254 aa). Basic and acidic residues-rich tracts occupy residues 102 to 237 and 245 to 261; these read TLEE…KTAD and HARE…EQQP. In terms of domain architecture, tr-type G spans 390–559; it reads GRAPVVTIMG…LLQSEVLELT (170 aa). Residues 399–406 form a G1 region; the sequence is GHVDHGKT. Residue 399–406 participates in GTP binding; it reads GHVDHGKT. Residues 424 to 428 are G2; that stretch reads GITQH. Residues 445-448 form a G3 region; the sequence is DTPG. GTP contacts are provided by residues 445–449 and 499–502; these read DTPGH and NKID. Residues 499–502 form a G4 region; sequence NKID. Residues 535–537 are G5; the sequence is SAK.

This sequence belongs to the TRAFAC class translation factor GTPase superfamily. Classic translation factor GTPase family. IF-2 subfamily.

It is found in the cytoplasm. Its function is as follows. One of the essential components for the initiation of protein synthesis. Protects formylmethionyl-tRNA from spontaneous hydrolysis and promotes its binding to the 30S ribosomal subunits. Also involved in the hydrolysis of GTP during the formation of the 70S ribosomal complex. The polypeptide is Translation initiation factor IF-2 (Aliivibrio salmonicida (strain LFI1238) (Vibrio salmonicida (strain LFI1238))).